A 152-amino-acid chain; its full sequence is Large ribosomal subunit protein bL9 (152 aa).

Belongs to the bacterial ribosomal protein bL9 family.

In terms of biological role, binds to the 23S rRNA. This chain is Large ribosomal subunit protein bL9, found in Prochlorococcus marinus (strain NATL1A).